We begin with the raw amino-acid sequence, 473 residues long: Ribulose bisphosphate carboxylase large chain 2 (473 aa).

Substrate-binding residues include Asn116 and Thr166. Catalysis depends on Lys168, which acts as the Proton acceptor. A substrate-binding site is contributed by Lys170. Mg(2+)-binding residues include Lys194, Asp196, and Glu197. Lys194 carries the N6-carboxylysine modification. Catalysis depends on His287, which acts as the Proton acceptor. Substrate-binding residues include Arg288, His320, and Ser372.

This sequence belongs to the RuBisCO large chain family. Type I subfamily. Heterohexadecamer of 8 large chains and 8 small chains. Mg(2+) is required as a cofactor.

It carries out the reaction 2 (2R)-3-phosphoglycerate + 2 H(+) = D-ribulose 1,5-bisphosphate + CO2 + H2O. The enzyme catalyses D-ribulose 1,5-bisphosphate + O2 = 2-phosphoglycolate + (2R)-3-phosphoglycerate + 2 H(+). In terms of biological role, ruBisCO catalyzes two reactions: the carboxylation of D-ribulose 1,5-bisphosphate, the primary event in carbon dioxide fixation, as well as the oxidative fragmentation of the pentose substrate. Both reactions occur simultaneously and in competition at the same active site. The chain is Ribulose bisphosphate carboxylase large chain 2 from Acidithiobacillus ferrooxidans (Thiobacillus ferrooxidans).